The sequence spans 463 residues: D(5)-like dopamine receptor (463 aa).

Residues 1 to 39 are Extracellular-facing; the sequence is MENFYNETEPTEPRGGVDPLRVVTAAEDVPAPVGGVSVR. N-linked (GlcNAc...) asparagine glycosylation occurs at Asn-6. The chain crosses the membrane as a helical span at residues 40 to 65; the sequence is ALTGCVLCALIVSTLLGNTLVCAAVI. Over 66–76 the chain is Cytoplasmic; sequence KFRHLRSKVTN. The chain crosses the membrane as a helical span at residues 77–103; it reads AFVVSLAVSDLFVAVLVMPWRAVSEVA. The Extracellular portion of the chain corresponds to 104 to 112; the sequence is GVWLFGRFC. Residues Cys-112 and Cys-194 are joined by a disulfide bond. The helical transmembrane segment at 113–135 threads the bilayer; that stretch reads DTWVAFDIMCSTASILNLCVISM. Residues 136 to 154 lie on the Cytoplasmic side of the membrane; the sequence is DRYWAISNPFRYERRMTRR. A helical transmembrane segment spans residues 155–180; sequence FAFLMIAVAWTLSVLISFIPVQLNWH. The Extracellular segment spans residues 181–198; sequence RADNNSSAHEQGDCNASL. The helical transmembrane segment at 199 to 223 threads the bilayer; the sequence is NRTYAISSSLISFYIPVLIMVGTYT. Residues 224 to 273 lie on the Cytoplasmic side of the membrane; that stretch reads RIFRIAQTQIRRISSLERAAGQRAQNQSHRASTHDESALKTSFKRETKVL. A helical transmembrane segment spans residues 274-301; the sequence is KTLSVIMGVFVFCWLPFFVLNCVVPFCD. Topologically, residues 302-315 are extracellular; it reads VDKVGEPPCVSDTT. The helical transmembrane segment at 316 to 337 threads the bilayer; that stretch reads FNIFVWFGWANSSLNPVIYAFN. Over 338–463 the chain is Cytoplasmic; it reads ADFRKAFTTI…PGQIQDLGDL (126 aa).

This sequence belongs to the G-protein coupled receptor 1 family.

The protein resides in the cell membrane. Receptor for dopamine. This Takifugu rubripes (Japanese pufferfish) protein is D(5)-like dopamine receptor (dl).